The sequence spans 150 residues: Large ribosomal subunit protein bL9 (150 aa).

The protein belongs to the bacterial ribosomal protein bL9 family.

Functionally, binds to the 23S rRNA. The chain is Large ribosomal subunit protein bL9 from Renibacterium salmoninarum (strain ATCC 33209 / DSM 20767 / JCM 11484 / NBRC 15589 / NCIMB 2235).